We begin with the raw amino-acid sequence, 295 residues long: Tyrosine recombinase XerC (295 aa).

One can recognise a Core-binding (CB) domain in the interval 1-85 (MQTYLQKYWN…ALRQFLAFLV (85 aa)). A Tyr recombinase domain is found at 106–285 (HLPKNINAEQ…NFQHLAEVYD (180 aa)). Active-site residues include Arg-145, Lys-169, His-237, Arg-240, and His-263. The active-site O-(3'-phospho-DNA)-tyrosine intermediate is the Tyr-272.

Belongs to the 'phage' integrase family. XerC subfamily. Forms a cyclic heterotetrameric complex composed of two molecules of XerC and two molecules of XerD.

The protein localises to the cytoplasm. Functionally, site-specific tyrosine recombinase, which acts by catalyzing the cutting and rejoining of the recombining DNA molecules. The XerC-XerD complex is essential to convert dimers of the bacterial chromosome into monomers to permit their segregation at cell division. It also contributes to the segregational stability of plasmids. In Mannheimia succiniciproducens (strain KCTC 0769BP / MBEL55E), this protein is Tyrosine recombinase XerC.